A 336-amino-acid chain; its full sequence is Dihydroorotate dehydrogenase (quinone) (336 aa).

FMN is bound by residues 62 to 66 (AGLDK) and Thr86. Lys66 provides a ligand contact to substrate. 111–115 (NRMGF) contacts substrate. 2 residues coordinate FMN: Asn139 and Asn172. Asn172 is a binding site for substrate. The active-site Nucleophile is Ser175. Substrate is bound at residue Asn177. Residues Lys217 and Thr245 each contribute to the FMN site. Residue 246–247 (NT) coordinates substrate. Residues Gly268, Gly297, and 318 to 319 (YS) contribute to the FMN site.

Belongs to the dihydroorotate dehydrogenase family. Type 2 subfamily. In terms of assembly, monomer. The cofactor is FMN.

The protein localises to the cell membrane. The catalysed reaction is (S)-dihydroorotate + a quinone = orotate + a quinol. Its pathway is pyrimidine metabolism; UMP biosynthesis via de novo pathway; orotate from (S)-dihydroorotate (quinone route): step 1/1. In terms of biological role, catalyzes the conversion of dihydroorotate to orotate with quinone as electron acceptor. This is Dihydroorotate dehydrogenase (quinone) from Proteus mirabilis (strain HI4320).